A 635-amino-acid polypeptide reads, in one-letter code: Glutamine--fructose-6-phosphate aminotransferase [isomerizing] (635 aa).

Cysteine 2 (nucleophile; for GATase activity) is an active-site residue. Positions 2–218 (CGIVGMVAGR…EGDIADVHRD (217 aa)) constitute a Glutamine amidotransferase type-2 domain. 2 consecutive SIS domains span residues 299-439 (FERL…AKKI) and 472-625 (CARH…IDQP). Residue lysine 630 is the For Fru-6P isomerization activity of the active site.

In terms of assembly, homodimer.

It localises to the cytoplasm. It carries out the reaction D-fructose 6-phosphate + L-glutamine = D-glucosamine 6-phosphate + L-glutamate. Catalyzes the first step in hexosamine metabolism, converting fructose-6P into glucosamine-6P using glutamine as a nitrogen source. The sequence is that of Glutamine--fructose-6-phosphate aminotransferase [isomerizing] from Treponema pallidum (strain Nichols).